Here is a 488-residue protein sequence, read N- to C-terminus: Adenylosuccinate synthetase 1, chloroplastic (488 aa).

Residues 1–47 (MSLSTVNHAAAAAAAAAGPGKSFSAAAPAAPSVRLPRTRAPAAAAVS) constitute a chloroplast transit peptide. GTP is bound by residues 75–81 (GDEGKGK) and 103–105 (GHT). The active-site Proton acceptor is the Asp-76. Residues Asp-76 and Gly-103 each contribute to the Mg(2+) site. Residues 76 to 79 (DEGK), 101 to 104 (NAGH), Thr-193, Arg-207, Gln-287, Thr-302, and Arg-366 contribute to the IMP site. His-104 (proton donor) is an active-site residue. 362–368 (TTTGRPR) lines the substrate pocket. GTP is bound by residues Arg-368, 394–396 (KLD), and 477–479 (GVG).

The protein belongs to the adenylosuccinate synthetase family. As to quaternary structure, homodimer. The cofactor is Mg(2+).

The protein resides in the plastid. Its subcellular location is the chloroplast. The catalysed reaction is IMP + L-aspartate + GTP = N(6)-(1,2-dicarboxyethyl)-AMP + GDP + phosphate + 2 H(+). Its pathway is purine metabolism; AMP biosynthesis via de novo pathway; AMP from IMP: step 1/2. Functionally, plays an important role in the de novo pathway and in the salvage pathway of purine nucleotide biosynthesis. Catalyzes the first committed step in the biosynthesis of AMP from IMP. The chain is Adenylosuccinate synthetase 1, chloroplastic from Oryza sativa subsp. japonica (Rice).